The following is a 1328-amino-acid chain: Myb-binding protein 1A (1328 aa).

Positions 1–22 (MESRDPAQPMSPGEATQSGARP) are disordered. The interval 1 to 582 (MESRDPAQPM…WDRMLQTLKE (582 aa)) is interaction with MYB. At Ser11 the chain carries Phosphoserine. An N6-acetyllysine mark is found at Lys71 and Lys158. 2 consecutive short sequence motifs (nuclear export signal) follow at residues 240-258 (SDEN…ASSV) and 263-281 (KLPA…EDKF). The tract at residues 698 to 753 (SEDENDRVVVTDDSDERRLKGAEDKSEEGEDNRSSESEEESEGEESEEEERDGDVD) is disordered. Over residues 703 to 721 (DRVVVTDDSDERRLKGAED) the composition is skewed to basic and acidic residues. The span at 734–752 (SEEESEGEESEEEERDGDV) shows a compositional bias: acidic residues. At Ser775 the chain carries Phosphoserine. The interval 1146–1292 (RPKLEKKDAK…KKGVLGKSPL (147 aa)) is disordered. The segment covering 1147-1156 (PKLEKKDAKE) has biased composition (basic and acidic residues). A Glycyl lysine isopeptide (Lys-Gly) (interchain with G-Cter in SUMO2) cross-link involves residue Lys1148. The tract at residues 1151–1328 (KKDAKEIPSA…KAQVRKAGKP (178 aa)) is required for nuclear and nucleolar localization. Residues Ser1159 and Ser1163 each carry the phosphoserine modification. Residues 1166–1184 (SKKRKKKGFLPETKKRKKR) are compositionally biased toward basic residues. At Ser1186 the chain carries Phosphoserine. Thr1190 and Thr1196 each carry phosphothreonine. A Phosphoserine modification is found at Ser1207. The segment covering 1209-1218 (GRKKRNRTKA) has biased composition (basic residues). Ser1232 is subject to Phosphoserine. Phosphothreonine is present on Thr1239. Residue Ser1241 is modified to Phosphoserine. Thr1244 carries the post-translational modification Phosphothreonine. A phosphoserine mark is found at Ser1248 and Ser1267. Thr1269 is subject to Phosphothreonine. Residues Ser1290 and Ser1303 each carry the phosphoserine modification. The disordered stretch occupies residues 1306–1328 (IRSPSLLQSGAKKKAQVRKAGKP). The residue at position 1307 (Arg1307) is a Citrulline. 3 positions are modified to phosphoserine: Ser1308, Ser1310, and Ser1314. Positions 1316-1328 (AKKKAQVRKAGKP) are enriched in basic residues.

Belongs to the MYBBP1A family. In terms of assembly, binds to and represses JUN and MYB via the leucine zipper regions present in these proteins. Also binds to and represses PPARGC1A: this interaction is abrogated when PPARGC1A is phosphorylated by MAPK1/ERK. Binds to and stimulates transcription by AHR. Binds to KPNA2. Interacts with CLOCK and CRY1. Component of the B-WICH complex, at least composed of SMARCA5/SNF2H, BAZ1B/WSTF, SF3B1, DEK, MYO1C, ERCC6, MYBBP1A and DDX21. Citrullinated by PADI4.

The protein resides in the cytoplasm. The protein localises to the nucleus. It localises to the nucleolus. Its function is as follows. May activate or repress transcription via interactions with sequence specific DNA-binding proteins. Repression may be mediated at least in part by histone deacetylase activity (HDAC activity). Acts as a corepressor and in concert with CRY1, represses the transcription of the core circadian clock component PER2. Preferentially binds to dimethylated histone H3 'Lys-9' (H3K9me2) on the PER2 promoter. Has a role in rRNA biogenesis together with PWP1. The polypeptide is Myb-binding protein 1A (MYBBP1A) (Homo sapiens (Human)).